The chain runs to 83 residues: MVADPTTTLQVKNTGSLSVNRYGWINIWMAILGQFFTLFPLFFESCLILLKTWLEIFPDNAGILRIYLLQFSAIVGYKTRRAA.

It belongs to the YqgD family.

This chain is Protein YqgD (yqgD), found in Escherichia coli (strain K12).